A 338-amino-acid chain; its full sequence is Ornithine carbamoyltransferase, catabolic (338 aa).

Residues 58 to 61, Gln85, Arg109, and 136 to 139 each bind carbamoyl phosphate; these read STRT and HPTQ. Residues Asn168, Asp232, and 236-237 contribute to the L-ornithine site; that span reads SM. Carbamoyl phosphate contacts are provided by residues 273–274 and Arg318; that span reads CL.

This sequence belongs to the aspartate/ornithine carbamoyltransferase superfamily. OTCase family.

It localises to the cytoplasm. The enzyme catalyses carbamoyl phosphate + L-ornithine = L-citrulline + phosphate + H(+). It functions in the pathway amino-acid degradation; L-arginine degradation via ADI pathway; carbamoyl phosphate from L-arginine: step 2/2. Functionally, reversibly catalyzes the transfer of the carbamoyl group from carbamoyl phosphate (CP) to the N(epsilon) atom of ornithine (ORN) to produce L-citrulline. In Streptococcus gordonii (strain Challis / ATCC 35105 / BCRC 15272 / CH1 / DL1 / V288), this protein is Ornithine carbamoyltransferase, catabolic.